The chain runs to 427 residues: Tyrosine--tRNA ligase (427 aa).

Y33 provides a ligand contact to L-tyrosine. Residues 38 to 47 carry the 'HIGH' region motif; it reads PTAPSLHVGN. Residues Y168 and Q172 each contribute to the L-tyrosine site. The short motif at 228-232 is the 'KMSKS' region element; the sequence is KFGKS. An ATP-binding site is contributed by K231. The 69-residue stretch at 358-426 folds into the S4 RNA-binding domain; that stretch reads EHMLDLVAST…GKKHHYLIKV (69 aa).

The protein belongs to the class-I aminoacyl-tRNA synthetase family. TyrS type 1 subfamily. In terms of assembly, homodimer.

It localises to the cytoplasm. The catalysed reaction is tRNA(Tyr) + L-tyrosine + ATP = L-tyrosyl-tRNA(Tyr) + AMP + diphosphate + H(+). Its function is as follows. Catalyzes the attachment of tyrosine to tRNA(Tyr) in a two-step reaction: tyrosine is first activated by ATP to form Tyr-AMP and then transferred to the acceptor end of tRNA(Tyr). This Amoebophilus asiaticus (strain 5a2) protein is Tyrosine--tRNA ligase.